Here is a 238-residue protein sequence, read N- to C-terminus: 7-cyano-7-deazaguanine synthase (238 aa).

ATP is bound at residue 12-22 (FSGGQDSGTCL). Zn(2+) contacts are provided by C200, C215, C218, and C221.

It belongs to the QueC family. Zn(2+) serves as cofactor.

The enzyme catalyses 7-carboxy-7-deazaguanine + NH4(+) + ATP = 7-cyano-7-deazaguanine + ADP + phosphate + H2O + H(+). Its pathway is purine metabolism; 7-cyano-7-deazaguanine biosynthesis. Catalyzes the ATP-dependent conversion of 7-carboxy-7-deazaguanine (CDG) to 7-cyano-7-deazaguanine (preQ(0)). The chain is 7-cyano-7-deazaguanine synthase from Lawsonia intracellularis (strain PHE/MN1-00).